We begin with the raw amino-acid sequence, 303 residues long: UDP-N-acetylenolpyruvoylglucosamine reductase (303 aa).

The region spanning Ile-30 to Asp-196 is the FAD-binding PCMH-type domain. Arg-174 is an active-site residue. Residue Ser-225 is the Proton donor of the active site. Glu-295 is an active-site residue.

The protein belongs to the MurB family. FAD serves as cofactor.

It localises to the cytoplasm. The enzyme catalyses UDP-N-acetyl-alpha-D-muramate + NADP(+) = UDP-N-acetyl-3-O-(1-carboxyvinyl)-alpha-D-glucosamine + NADPH + H(+). Its pathway is cell wall biogenesis; peptidoglycan biosynthesis. Functionally, cell wall formation. The chain is UDP-N-acetylenolpyruvoylglucosamine reductase from Bacillus pumilus (strain SAFR-032).